The primary structure comprises 143 residues: Large ribosomal subunit protein uL16 (143 aa).

Residues 1-14 are compositionally biased toward basic residues; it reads MLTPKRVKWRRQHR. The interval 1 to 23 is disordered; sequence MLTPKRVKWRRQHRPDRAGKAKG.

The protein belongs to the universal ribosomal protein uL16 family. In terms of assembly, part of the 50S ribosomal subunit.

Functionally, binds 23S rRNA and is also seen to make contacts with the A and possibly P site tRNAs. The sequence is that of Large ribosomal subunit protein uL16 from Desulforudis audaxviator (strain MP104C).